A 169-amino-acid chain; its full sequence is dCTP pyrophosphatase 1 (169 aa).

The interval 1-26 is disordered; sequence MSASEEMLGGARGESTTATGPFSFSS. Over residues 14–26 the composition is skewed to polar residues; that stretch reads ESTTATGPFSFSS. Residues histidine 37 and 46–50 each bind substrate; that span reads WEQFH. 2 residues coordinate Mg(2+): glutamate 62 and glutamate 65. Tryptophan 72 is a substrate binding site. A Phosphoserine modification is found at serine 84. Mg(2+)-binding residues include glutamate 94 and aspartate 97. Tyrosine 101 is a binding site for substrate. A disordered region spans residues 143–169; it reads LPHGATSENQAMGPADPASESTGQVST.

Homotetramer. Mg(2+) is required as a cofactor.

It is found in the cytoplasm. The protein resides in the cytosol. It carries out the reaction dCTP + H2O = dCMP + diphosphate + H(+). Hydrolyzes deoxynucleoside triphosphates (dNTPs) to the corresponding nucleoside monophosphates. Has a strong preference for dCTP and its analogs including 5-iodo-dCTP and 5-methyl-dCTP for which it may even have a higher efficiency. May protect DNA or RNA against the incorporation of these genotoxic nucleotide analogs through their catabolism. The polypeptide is dCTP pyrophosphatase 1 (Bos taurus (Bovine)).